The following is a 185-amino-acid chain: MGNTLSIFGKLFDGLFGKKEMRILMVGLDAAGKTTILYKLKLGEVVTTIPTIGFNVETVEYKNIQFTVWDVGGQDKIRPLWRHYFQNTQGIIFVVDSNDRDRVVEAREELQRMLNEDELRDALLLVFANKQDLPNAMNAAEITDKLGLSSLRQRSWYIQATCATTGDGLFEGLDWLSTELKKKSP.

Glycine 2 is lipidated: N-myristoyl glycine. Residues 27–34 (GLDAAGKT), 70–74 (DVGGQ), and 129–132 (NKQD) each bind GTP.

It belongs to the small GTPase superfamily. Arf family.

The protein localises to the golgi apparatus. Functionally, GTP-binding protein involved in protein trafficking; may modulate vesicle budding and uncoating within the Golgi apparatus. The chain is ADP-ribosylation factor from Neurospora crassa (strain ATCC 24698 / 74-OR23-1A / CBS 708.71 / DSM 1257 / FGSC 987).